The chain runs to 120 residues: MKVSRRESTRRRHRRVRRTIVGTPARPRLSVFRSNNHIYAQVIDDAAGHTLAAASSLDPDLRQSLTSGGNQQASAAVGKLIAERAQAKGVTTVVFDRGGNLYHGRVKALAEAAREAGLEF.

It belongs to the universal ribosomal protein uL18 family. As to quaternary structure, part of the 50S ribosomal subunit; part of the 5S rRNA/L5/L18/L25 subcomplex. Contacts the 5S and 23S rRNAs.

Functionally, this is one of the proteins that bind and probably mediate the attachment of the 5S RNA into the large ribosomal subunit, where it forms part of the central protuberance. This Synechococcus elongatus (strain ATCC 33912 / PCC 7942 / FACHB-805) (Anacystis nidulans R2) protein is Large ribosomal subunit protein uL18.